Here is a 469-residue protein sequence, read N- to C-terminus: 3-isopropylmalate dehydratase large subunit (469 aa).

[4Fe-4S] cluster contacts are provided by C347, C407, and C410.

It belongs to the aconitase/IPM isomerase family. LeuC type 1 subfamily. As to quaternary structure, heterodimer of LeuC and LeuD. It depends on [4Fe-4S] cluster as a cofactor.

The enzyme catalyses (2R,3S)-3-isopropylmalate = (2S)-2-isopropylmalate. The protein operates within amino-acid biosynthesis; L-leucine biosynthesis; L-leucine from 3-methyl-2-oxobutanoate: step 2/4. In terms of biological role, catalyzes the isomerization between 2-isopropylmalate and 3-isopropylmalate, via the formation of 2-isopropylmaleate. The sequence is that of 3-isopropylmalate dehydratase large subunit from Proteus mirabilis (strain HI4320).